The chain runs to 302 residues: Nucleotide-binding protein Bmul_0520/BMULJ_02739 (302 aa).

Residue 8-15 participates in ATP binding; it reads GISGSGKS. GTP is bound at residue 57–60; that stretch reads DARS.

The protein belongs to the RapZ-like family.

Displays ATPase and GTPase activities. The protein is Nucleotide-binding protein Bmul_0520/BMULJ_02739 of Burkholderia multivorans (strain ATCC 17616 / 249).